The chain runs to 605 residues: Glucose oxidase (605 aa).

An N-terminal signal peptide occupies residues 1–16 (MKTILSSSLVVSMAAA). FAD contacts are provided by Leu51 and Thr52. Asn65 carries an N-linked (GlcNAc...) asparagine glycan. Glu72 contributes to the FAD binding site. Asn111 carries N-linked (GlcNAc...) asparagine glycosylation. Ser125, Asn129, Gly130, and Thr132 together coordinate FAD. Cys186 and Cys228 form a disulfide bridge. Asn190 is a glycosylation site (N-linked (GlcNAc...) asparagine). Residue Val272 coordinates FAD. N-linked (GlcNAc...) asparagine glycosylation is found at Asn280, Asn377, Asn410, and Asn495. His538 functions as the Proton acceptor in the catalytic mechanism. Residues Arg559 and Val560 each contribute to the O2 site. The FAD site is built by Gly571 and Met583.

This sequence belongs to the GMC oxidoreductase family. In terms of assembly, homodimer. The cofactor is FAD.

The protein resides in the secreted. The protein localises to the cell wall. It localises to the cytoplasm. It is found in the extracellular space. Its subcellular location is the extracellular matrix. It carries out the reaction beta-D-glucose + O2 = D-glucono-1,5-lactone + H2O2. Glucose oxidase catalyzes the oxidation of beta-D-glucose to D-glucono-delta-lactone and hydrogen peroxide in the presence of molecular oxygen. Acts as a critical factor modulating pathogenicity by controlling transcription of genes important for fungal secondary metabolism and infection such as those coding for enzymes involved in degradation of the host cell wall. This Aspergillus carbonarius (strain ITEM 5010) protein is Glucose oxidase.